An 810-amino-acid chain; its full sequence is Phenylalanine--tRNA ligase beta subunit (810 aa).

The region spanning 39-154 is the tRNA-binding domain; the sequence is APPTEKIVVG…EGTPVGQDIR (116 aa). Residues 405-480 form the B5 domain; sequence PQRAPVSMRA…RIYGFEKIPA (76 aa). Asp458, Asp464, Glu467, and Glu468 together coordinate Mg(2+). Residues 707–809 form the FDX-ACB domain; sequence SKFPPVRRDI…MARVYGARLR (103 aa).

This sequence belongs to the phenylalanyl-tRNA synthetase beta subunit family. Type 1 subfamily. Tetramer of two alpha and two beta subunits. The cofactor is Mg(2+).

The protein resides in the cytoplasm. It catalyses the reaction tRNA(Phe) + L-phenylalanine + ATP = L-phenylalanyl-tRNA(Phe) + AMP + diphosphate + H(+). This chain is Phenylalanine--tRNA ligase beta subunit, found in Burkholderia mallei (strain ATCC 23344).